The sequence spans 429 residues: 5-methylthioadenosine/S-adenosylhomocysteine deaminase (429 aa).

2 residues coordinate Zn(2+): His65 and His67. Substrate contacts are provided by Glu94 and His182. His209 serves as a coordination point for Zn(2+). Residues Glu212 and Asp297 each coordinate substrate. A Zn(2+)-binding site is contributed by Asp297.

It belongs to the metallo-dependent hydrolases superfamily. MTA/SAH deaminase family. Requires Zn(2+) as cofactor.

The catalysed reaction is S-adenosyl-L-homocysteine + H2O + H(+) = S-inosyl-L-homocysteine + NH4(+). The enzyme catalyses S-methyl-5'-thioadenosine + H2O + H(+) = S-methyl-5'-thioinosine + NH4(+). Its function is as follows. Catalyzes the deamination of 5-methylthioadenosine and S-adenosyl-L-homocysteine into 5-methylthioinosine and S-inosyl-L-homocysteine, respectively. Is also able to deaminate adenosine. The protein is 5-methylthioadenosine/S-adenosylhomocysteine deaminase of Clostridium tetani (strain Massachusetts / E88).